The following is a 176-amino-acid chain: uncharacterized protein (176 aa).

Over residues 15-28 the composition is skewed to polar residues; the sequence is TSSNPPASASQSTG. 2 disordered regions span residues 15–100 and 125–176; these read TSSN…TSAG and ASLR…NLGA. Residues 43–52 are compositionally biased toward basic and acidic residues; that stretch reads FIDKVTDKPS.

This is an uncharacterized protein from Homo sapiens (Human).